A 205-amino-acid polypeptide reads, in one-letter code: Putative 3-methyladenine DNA glycosylase (205 aa).

This sequence belongs to the DNA glycosylase MPG family.

The chain is Putative 3-methyladenine DNA glycosylase from Clostridium perfringens (strain SM101 / Type A).